The primary structure comprises 477 residues: SH3 domain-binding protein 5 homolog (477 aa).

Positions 12-95 (QIQIELENLN…AAVKFQRANE (84 aa)) form a coiled coil. Phosphoserine occurs at positions 113 and 115. A coiled-coil region spans residues 122-221 (NAWQEMLNHA…YSTALRNLER (100 aa)). Disordered regions lie at residues 224–258 (EDIH…ALPS) and 276–306 (GSQM…ETGA). Residues 291-305 (ETEDEEDACDYDETG) are compositionally biased toward acidic residues.

The protein belongs to the SH3BP5 family.

This chain is SH3 domain-binding protein 5 homolog (pcs), found in Drosophila melanogaster (Fruit fly).